The chain runs to 324 residues: Endochitinase 1 (324 aa).

Residues 1–22 form the signal peptide; that stretch reads MSFLQALSIFLLLLLYVVVGSA. Positions 23–64 constitute a Chitin-binding type-1 domain; it reads EQCGRQAGGALCPGGLCCSQFGWCGSTADYCTVPGCQSQCSG. 7 disulfides stabilise this stretch: Cys25–Cys40, Cys34–Cys46, Cys39–Cys53, Cys58–Cys62, Cys95–Cys158, Cys170–Cys178, and Cys277–Cys309. Glu139 serves as the catalytic Proton donor. Positions 318–324 are cleaved as a propeptide — removed in mature form; that stretch reads GVSVDSM.

This sequence belongs to the glycosyl hydrolase 19 family. Chitinase class I subfamily.

It carries out the reaction Random endo-hydrolysis of N-acetyl-beta-D-glucosaminide (1-&gt;4)-beta-linkages in chitin and chitodextrins.. Defense against chitin-containing fungal pathogens. The protein is Endochitinase 1 of Gossypium hirsutum (Upland cotton).